Consider the following 103-residue polypeptide: MESVQELIPLAKEMMAQKPRGKLVKLYVLGSVLALFGVVLGLVETVCSPFTAASRLRDQEAAVVELREACEQQSLHKQALLAGGKAQEATLCSRALSLRQHAS.

Directly interacts with BCL2; this interaction prevents the formation of the anti-apoptotic BAX-BCL2 complex.

The protein localises to the mitochondrion. Functionally, promotes apoptosis by binding to BCL2, hence preventing the formation of protective BCL2-BAX heterodimers. The sequence is that of G0/G1 switch protein 2 (G0s2) from Mus musculus (Mouse).